A 133-amino-acid chain; its full sequence is Ribonuclease VapC29 (133 aa).

A PINc domain is found at valine 3–histidine 122. Positions 6 and 97 each coordinate Mg(2+).

This sequence belongs to the PINc/VapC protein family. The cofactor is Mg(2+).

Its function is as follows. Toxic component of a type II toxin-antitoxin (TA) system. Its cognate antitoxin is VapB29. Has ribonuclease activity. The protein is Ribonuclease VapC29 of Mycobacterium tuberculosis (strain CDC 1551 / Oshkosh).